Reading from the N-terminus, the 443-residue chain is EGF-containing fibulin-like extracellular matrix protein 2 (443 aa).

Positions 1–25 are cleaved as a signal peptide; the sequence is MLPFASCLPGSLLLWALLLLLLGAA. Residues 36–81 enclose the EGF-like 1; atypical domain; it reads YTECTDGYEWDADSQHCRDVNECLTIPEACKGEMKCINHYGGYLCL. Cystine bridges form between cysteine 58/cysteine 121, cysteine 65/cysteine 80, cysteine 71/cysteine 109, cysteine 127/cysteine 140, cysteine 134/cysteine 149, cysteine 151/cysteine 162, cysteine 168/cysteine 177, cysteine 173/cysteine 186, cysteine 188/cysteine 201, cysteine 207/cysteine 217, cysteine 213/cysteine 226, cysteine 228/cysteine 241, cysteine 247/cysteine 258, cysteine 254/cysteine 267, cysteine 269/cysteine 281, cysteine 287/cysteine 300, cysteine 294/cysteine 309, and cysteine 315/cysteine 327. In terms of domain architecture, EGF-like 2; calcium-binding spans 123-163; that stretch reads DVDECAQALHDCRPSQDCHNLPGSYQCTCPDGYRKVGPECV. The region spanning 164-202 is the EGF-like 3; calcium-binding domain; it reads DIDECRYRYCQHRCVNLPGSFRCQCEPGFQLGPNNRSCV. N-linked (GlcNAc...) asparagine glycosylation is present at asparagine 198. Residues 203 to 242 enclose the EGF-like 4; calcium-binding domain; that stretch reads DVNECDMGAPCEQRCFNSYGTFLCRCNQGYELHRDGFSCS. One can recognise an EGF-like 5; calcium-binding domain in the interval 243 to 282; sequence DIDECSYSSYLCQYRCVNEPGRFSCHCPQGYQLLATRLCQ. The 46-residue stretch at 283–328 folds into the EGF-like 6; calcium-binding domain; it reads DIDECETGAHQCSEAQTCVNFHGGYRCVDTNRCVEPYVQVSDNRCF. A glycan (N-linked (GlcNAc...) asparagine) is linked at asparagine 394.

Belongs to the fibulin family. In terms of assembly, homodimer; disulfide-linked. Multimer; allows heparin binding. Monomer. Interacts with FBN1 (via N-terminal domain); this interaction inhibits EFEMP2 binding to LOX and ELN. Interacts with LOX (via propeptide); this interaction is strong and facilitates formation of ternary complexes with ELN during elastic fiber assembly; this interaction limits interaction of EFEMP2 with FBLN5. Interacts with PITX2. Interacts with ELN with moderate affinity; this interaction regulates ELN self-assembly maturation stage. Interacts with FBLN5 with moderate affinity. Interacts with LOXL1 (via propeptide), LTBP1 and TGFB1 stronger than with LOXL2 and LTBP3. Interacts with PCOLCE. Interacts with collagen type IV trimer (COL4A1-COL4A1-COL4A2), NID2 and moderately with COL15A1-derived endostatin. Interacts with EMILIN1; this interaction promotes the incorporation of EFEMP2 into the extracellular matrix. Interacts with LTBP4; the LTBP4 long form (LTBP4L) has a stronger binding affinity than the LTBP4 short form and the LTBP4 long form promotes fibrillar deposition of EFEMP2. Post-translationally, N-glycosylated; contains mostly complex-type glycans. Not O-glycosylated. In terms of processing, cleaved by ELANE; produces a 50-55 kDa fragment. Cleaved by MMP2 and MMP9; produces several fragments.

Its subcellular location is the secreted. It localises to the extracellular space. It is found in the extracellular matrix. The protein localises to the basement membrane. Functionally, plays a crucial role in elastic fiber formation in tissue, and in the formation of ultrastructural connections between elastic laminae and smooth muscle cells in the aorta, therefore participates in terminal differentiation and maturation of smooth muscle cell (SMC) and in the mechanical properties and wall integrity maintenance of the aorta. In addition, is involved in the control of collagen fibril assembly in tissue throught proteolytic activation of LOX leading to cross- linking of collagen and elastin. Also promotes ELN coacervation and participates in the deposition of ELN coacervates on to microfibrils but also regulates ELN cross- linking through LOX interaction. Moreover adheres to the cells through heparin binding in a calcium-dependent manner and regulates vascularlar smooth muscle cells proliferation through angiotensin signaling. This Cricetulus griseus (Chinese hamster) protein is EGF-containing fibulin-like extracellular matrix protein 2.